We begin with the raw amino-acid sequence, 249 residues long: Isoprenyl transferase (249 aa).

D25 is a catalytic residue. Residue D25 participates in Mg(2+) binding. Substrate is bound by residues 26 to 29 (GNGR), W30, R38, H42, and 70 to 72 (STE). N73 acts as the Proton acceptor in catalysis. Residues W74, R76, R197, and 203-205 (RLS) contribute to the substrate site. E216 contacts Mg(2+).

This sequence belongs to the UPP synthase family. As to quaternary structure, homodimer. Mg(2+) serves as cofactor.

Its function is as follows. Catalyzes the condensation of isopentenyl diphosphate (IPP) with allylic pyrophosphates generating different type of terpenoids. This chain is Isoprenyl transferase, found in Streptococcus pyogenes serotype M3 (strain ATCC BAA-595 / MGAS315).